The following is a 409-amino-acid chain: uncharacterized protein (409 aa).

Residues 36–50 (HLKAKARAQESDSDR) are compositionally biased toward basic and acidic residues. Disordered regions lie at residues 36–67 (HLKA…TFSS), 239–298 (IENT…SSTI), and 338–373 (RSQI…TGPR). The segment covering 51 to 67 (PCSSIESSSEPASTFSS) has biased composition (low complexity). The segment covering 245–265 (VREESNQEHPPGKQEKTEKHP) has biased composition (basic and acidic residues). Positions 268-281 (LQGSHQAEPETSSK) are enriched in polar residues. Composition is skewed to basic and acidic residues over residues 282–294 (NSEE…KMDD) and 338–350 (RSQI…EGRR).

This is an uncharacterized protein from Homo sapiens (Human).